The chain runs to 386 residues: ABC transporter permease protein NatB (386 aa).

6 consecutive transmembrane segments (helical) span residues 19–39, 172–192, 226–246, 273–293, 300–320, and 353–373; these read TILL…FFYE, AIML…SGAM, WLAV…FLIL, ALII…ISIM, AQSY…FIFS, and ATIL…FLLA.

The complex is composed of NatA and NatB.

It localises to the cell membrane. It carries out the reaction Na(+)(in) + ATP + H2O = Na(+)(out) + ADP + phosphate + H(+). Its function is as follows. Part of an ABC transporter that catalyzes ATP-dependent electrogenic sodium extrusion. The sequence is that of ABC transporter permease protein NatB from Bacillus subtilis (strain 168).